A 789-amino-acid chain; its full sequence is Probable 3-hydroxyacyl-CoA dehydrogenase (789 aa).

It belongs to the 3-hydroxyacyl-CoA dehydrogenase family.

The catalysed reaction is a (3S)-3-hydroxyacyl-CoA + NAD(+) = a 3-oxoacyl-CoA + NADH + H(+). It functions in the pathway lipid metabolism; fatty acid beta-oxidation. In terms of biological role, involved in the degradation of long-chain fatty acids. This is Probable 3-hydroxyacyl-CoA dehydrogenase (fadN) from Bacillus subtilis (strain 168).